Here is a 328-residue protein sequence, read N- to C-terminus: NADH:quinone reductase (328 aa).

FMN contacts are provided by residues 22–24 (GMQ), Thr75, Lys124, Ala150, 178–180 (SGG), and 201–202 (GT).

The protein belongs to the nitronate monooxygenase family. As to quaternary structure, monomer. It depends on FMN as a cofactor.

It catalyses the reaction a quinone + NADH + H(+) = a quinol + NAD(+). Functionally, catalyzes the NADH-dependent reduction of a broad spectrum of quinone substrates, generating the corresponding hydroquinones. Highly prefers NADH to NADPH as a reducing substrate. Also displays a small NADH oxidase activity. Does not exhibit nitronate monooxygenase activity; is inactive against propionate 3-nitronate, 3-nitropropionate, nitroethane, 1-nitropropane, 2-nitropropane, and the anionic forms ethylnitronate, propyl-1-nitronate, and propyl-2-nitronate. Has no azoreductase activity since it is not able to reduce the azo dye methyl red with NADH. May be required to maintain an appropriate [NAD(+)]/[NADH] ratio for the catabolism of fatty acids in P.aeruginosa PAO1. This chain is NADH:quinone reductase, found in Pseudomonas aeruginosa (strain ATCC 15692 / DSM 22644 / CIP 104116 / JCM 14847 / LMG 12228 / 1C / PRS 101 / PAO1).